The chain runs to 333 residues: Transmembrane protein I329L (333 aa).

A signal peptide spans 1–31 (MLRVFIFFVFLGSGLTGRIKPQITCKYFISE). N-linked (GlcNAc...) asparagine; by host glycans are attached at residues asparagine 32, asparagine 39, asparagine 44, asparagine 76, asparagine 82, and asparagine 101. Topologically, residues 32–239 (NNTWYKYNVT…NTERYKSCYP (208 aa)) are extracellular. An LRR repeat occupies 112 to 133 (ELKFLDLRYNDLQVIEYNILRK). Asparagine 181, asparagine 185, and asparagine 219 each carry an N-linked (GlcNAc...) asparagine; by host glycan. Cysteine 195 and cysteine 237 form a disulfide bridge. A helical transmembrane segment spans residues 240–260 (LVFISILCSCISFLFLFICLL). Residues 261–333 (RSICKKYSCT…EKKVSCSRRK (73 aa)) lie on the Cytoplasmic side of the membrane.

This sequence belongs to the asfivirus I329L family. In terms of processing, highly glycosylated.

Its subcellular location is the host endoplasmic reticulum membrane. The protein resides in the host Golgi apparatus membrane. In terms of biological role, viral TLR3 homolog that probably prevents TLR3 dimerization and subsequent induction of IFN. Inhibits dsRNA-stimulated activation of NF-kB and IRF3. In Ornithodoros (relapsing fever ticks), this protein is Transmembrane protein I329L.